A 409-amino-acid polypeptide reads, in one-letter code: 4-diphosphocytidyl-2-C-methyl-D-erythritol kinase (409 aa).

Positions 1–22 are enriched in polar residues; sequence MKTDGGNTWRASHSKPLNTANT. Residues 1–26 form a disordered region; sequence MKTDGGNTWRASHSKPLNTANTMGEP. 201–211 serves as a coordination point for ATP; that stretch reads PVAAGLAGGSA. Asp-243 is an active-site residue.

It belongs to the GHMP kinase family. IspE subfamily.

The enzyme catalyses 4-CDP-2-C-methyl-D-erythritol + ATP = 4-CDP-2-C-methyl-D-erythritol 2-phosphate + ADP + H(+). It participates in isoprenoid biosynthesis; isopentenyl diphosphate biosynthesis via DXP pathway; isopentenyl diphosphate from 1-deoxy-D-xylulose 5-phosphate: step 3/6. Functionally, catalyzes the phosphorylation of the position 2 hydroxy group of 4-diphosphocytidyl-2C-methyl-D-erythritol. This Tropheryma whipplei (strain Twist) (Whipple's bacillus) protein is 4-diphosphocytidyl-2-C-methyl-D-erythritol kinase (ispE).